A 108-amino-acid polypeptide reads, in one-letter code: Small ribosomal subunit protein uS17 (108 aa).

The protein belongs to the universal ribosomal protein uS17 family. Part of the 30S ribosomal subunit.

One of the primary rRNA binding proteins, it binds specifically to the 5'-end of 16S ribosomal RNA. This is Small ribosomal subunit protein uS17 from Methanoregula boonei (strain DSM 21154 / JCM 14090 / 6A8).